The sequence spans 862 residues: DNA replication licensing factor MCM4 (862 aa).

Residues 1–10 (MSSPASTPSR) are compositionally biased toward low complexity. 2 disordered regions span residues 1–71 (MSSP…FSSP) and 90–121 (TYGTPSSRVEGTPRSGVRGTPVRQRPDLGSAR). Ser2 is modified (N-acetylserine). Ser6 is modified (phosphoserine). Phosphothreonine is present on residues Thr7 and Thr19. 3 positions are modified to phosphoserine: Ser26, Ser31, and Ser32. Polar residues predominate over residues 61–71 (PPAQNALFSSP). Thr101 is modified (phosphothreonine). Ser104 bears the Phosphoserine mark. Thr109 is modified (phosphothreonine). A phosphoserine mark is found at Ser119, Ser130, Ser141, and Ser144. Lys219 carries the post-translational modification N6-acetyllysine. Lys438 participates in a covalent cross-link: Glycyl lysine isopeptide (Lys-Gly) (interchain with G-Cter in SUMO2). Lys449 bears the N6-acetyllysine mark. In terms of domain architecture, MCM spans 457–666 (IYERLASALA…YDRRLAHHLV (210 aa)). 8 residues coordinate ATP: Tyr470, Arg496, Lys515, Ser516, Asn617, Arg642, Arg731, and Glu734. The Arginine finger signature appears at 641 to 644 (SRFD). Lys797 participates in a covalent cross-link: Glycyl lysine isopeptide (Lys-Gly) (interchain with G-Cter in SUMO2). Lys857 bears the N6-acetyllysine mark.

The protein belongs to the MCM family. In terms of assembly, component of the MCM2-7 complex. The complex forms a toroidal hexameric ring with the proposed subunit order MCM2-MCM6-MCM4-MCM7-MCM3-MCM5. Component of the CMG helicase complex, a hexameric ring of related MCM2-7 subunits stabilized by CDC45 and the tetrameric GINS complex. Interacts with MCMBP. Sumoylated; SUMO2 modified in response to stress caused by inhibition of proteasome activity (in vitro).

The protein resides in the nucleus. Its subcellular location is the chromosome. It carries out the reaction ATP + H2O = ADP + phosphate + H(+). Acts as a component of the MCM2-7 complex (MCM complex) which is the replicative helicase essential for 'once per cell cycle' DNA replication initiation and elongation in eukaryotic cells. Core component of CDC45-MCM-GINS (CMG) helicase, the molecular machine that unwinds template DNA during replication, and around which the replisome is built. The active ATPase sites in the MCM2-7 ring are formed through the interaction surfaces of two neighboring subunits such that a critical structure of a conserved arginine finger motif is provided in trans relative to the ATP-binding site of the Walker A box of the adjacent subunit. The six ATPase active sites, however, are likely to contribute differentially to the complex helicase activity. This chain is DNA replication licensing factor MCM4 (Mcm4), found in Mus musculus (Mouse).